The following is a 320-amino-acid chain: o-succinylbenzoate synthase (320 aa).

The active-site Proton donor is Lys133. The Mg(2+) site is built by Asp161, Glu190, and Asp213. Catalysis depends on Lys235, which acts as the Proton acceptor.

Belongs to the mandelate racemase/muconate lactonizing enzyme family. MenC type 1 subfamily. It depends on a divalent metal cation as a cofactor.

It catalyses the reaction (1R,6R)-6-hydroxy-2-succinyl-cyclohexa-2,4-diene-1-carboxylate = 2-succinylbenzoate + H2O. Its pathway is quinol/quinone metabolism; 1,4-dihydroxy-2-naphthoate biosynthesis; 1,4-dihydroxy-2-naphthoate from chorismate: step 4/7. It participates in quinol/quinone metabolism; menaquinone biosynthesis. Converts 2-succinyl-6-hydroxy-2,4-cyclohexadiene-1-carboxylate (SHCHC) to 2-succinylbenzoate (OSB). The polypeptide is o-succinylbenzoate synthase (Escherichia coli O157:H7).